The following is a 76-amino-acid chain: Glutathione S-transferase (76 aa).

The region spanning 1 to 40 (XVAFETVPVDLMKGEHKQPAYLALQPFGTVPAVVDGDYXL) is the GST N-terminal domain. The region spanning 41–76 (LSAVLDVYEAHLHGYLAGDFVSLADLAHLPFTDYLV) is the GST C-terminal domain.

Belongs to the GST superfamily. Theta family.

Its subcellular location is the cytoplasm. The enzyme catalyses RX + glutathione = an S-substituted glutathione + a halide anion + H(+). Its function is as follows. Conjugation of reduced glutathione to a wide number of exogenous and endogenous hydrophobic electrophiles. In Brassica oleracea var. italica (Broccoli), this protein is Glutathione S-transferase.